The sequence spans 262 residues: Sulfur carrier protein FdhD (262 aa).

Cys105 acts as the Cysteine persulfide intermediate in catalysis. Mo-bis(molybdopterin guanine dinucleotide) is bound at residue 246 to 251 (FVRKNR).

Belongs to the FdhD family.

The protein resides in the cytoplasm. Required for formate dehydrogenase (FDH) activity. Acts as a sulfur carrier protein that transfers sulfur from IscS to the molybdenum cofactor prior to its insertion into FDH. The polypeptide is Sulfur carrier protein FdhD (Picrophilus torridus (strain ATCC 700027 / DSM 9790 / JCM 10055 / NBRC 100828 / KAW 2/3)).